The following is a 435-amino-acid chain: Serine protease snk (435 aa).

An N-terminal signal peptide occupies residues 1-27 (MIILWSLIVHLQLTCLHLILQTPNLEA). The Clip domain maps to 92-138 (FCRRSFDGRSGYCILAYQCLHVIREYRVHGTRIDICTHRNNVPVICC). Disulfide bonds link Cys93–Cys137, Cys104–Cys127, Cys110–Cys138, Cys179–Cys303, Cys220–Cys236, Cys346–Cys366, and Cys377–Cys408. In terms of domain architecture, Peptidase S1 spans 186–432 (IVGGTPTRHG…YLDWIEKIAF (247 aa)). His235 serves as the catalytic Charge relay system. N-linked (GlcNAc...) asparagine glycosylation occurs at Asn255. The Charge relay system role is filled by Asp283. The Charge relay system role is filled by Ser381.

The protein belongs to the peptidase S1 family. CLIP subfamily. In terms of assembly, interacts (via N-terminal prodomain) with ea/easter (via Peptidase domain); leads to proteolytic activation of ea by snk. This interaction does not require sulfation of a vitelline membrane component by pip but proteolytic cleavage of ea by snk does. Post-translationally, proteolytically activated by gd. May also be cleaved by another protease.

Its subcellular location is the secreted. Its function is as follows. Component of the extracellular signaling pathway that establishes the dorsal-ventral pathway of the embryo. A protease cascade involving ndl, gd, snk and ea results in activation of the spz Toll receptor ligand; acts downstream of ndl and gd. Activation of ea requires both activation of the ndl-gd-snk protease cascade and sulfation of a vitelline membrane component by pip. Localized activation of the Toll receptor in the ventral region of the embryo defines cell identities along the dorsal-ventral continuum. In Drosophila melanogaster (Fruit fly), this protein is Serine protease snk.